The sequence spans 334 residues: Transaldolase (334 aa).

Catalysis depends on K136, which acts as the Schiff-base intermediate with substrate.

The protein belongs to the transaldolase family. Type 1 subfamily. As to quaternary structure, homodimer.

The protein localises to the cytoplasm. The catalysed reaction is D-sedoheptulose 7-phosphate + D-glyceraldehyde 3-phosphate = D-erythrose 4-phosphate + beta-D-fructose 6-phosphate. It participates in carbohydrate degradation; pentose phosphate pathway; D-glyceraldehyde 3-phosphate and beta-D-fructose 6-phosphate from D-ribose 5-phosphate and D-xylulose 5-phosphate (non-oxidative stage): step 2/3. Functionally, transaldolase is important for the balance of metabolites in the pentose-phosphate pathway. This chain is Transaldolase, found in Nostoc punctiforme (strain ATCC 29133 / PCC 73102).